A 236-amino-acid chain; its full sequence is MNAERKFLFACLIFALVIYAIHAFGLFDLLTDLPHLQTLIRQSGFFGYSLYILLFIIATLLLLPGSILVIAGGIVFGPLLGTLLSLIAATLASSCSFLLARWLGRDLLLKYVGHSNTFQAIEKGIARNGIDFLILTRLIPLFPYNIQNYAYGLTTIAFWPYTLISALTTLPGIVIYTVMASDLANEGITLRFILQLCLAGLALFILVQLAKLYARHKHVDLSASRRSPLTHPKNEG.

A run of 5 helical transmembrane segments spans residues 7 to 27, 50 to 70, 72 to 92, 156 to 176, and 192 to 212; these read FLFA…FGLF, LYIL…ILVI, GGIV…ATLA, IAFW…IVIY, and FILQ…LAKL. The VTT domain stretch occupies residues 73–183; the sequence is GIVFGPLLGT…VIYTVMASDL (111 aa).

It belongs to the TVP38/TMEM64 family.

Its subcellular location is the cell membrane. The polypeptide is TVP38/TMEM64 family membrane protein YdjX (ydjX) (Escherichia coli (strain K12)).